A 545-amino-acid polypeptide reads, in one-letter code: ATP synthase subunit alpha (545 aa).

172-179 contacts ATP; that stretch reads GDRKTGKT. A disordered region spans residues 511–545; that stretch reads FQTTDGTPVINEPEARPLGDDEVTKSQITVSRKTQ. Basic and acidic residues predominate over residues 523–534; sequence PEARPLGDDEVT. Positions 535–545 are enriched in polar residues; it reads KSQITVSRKTQ.

Belongs to the ATPase alpha/beta chains family. As to quaternary structure, F-type ATPases have 2 components, CF(1) - the catalytic core - and CF(0) - the membrane proton channel. CF(1) has five subunits: alpha(3), beta(3), gamma(1), delta(1), epsilon(1). CF(0) has three main subunits: a(1), b(2) and c(9-12). The alpha and beta chains form an alternating ring which encloses part of the gamma chain. CF(1) is attached to CF(0) by a central stalk formed by the gamma and epsilon chains, while a peripheral stalk is formed by the delta and b chains.

Its subcellular location is the cell membrane. The enzyme catalyses ATP + H2O + 4 H(+)(in) = ADP + phosphate + 5 H(+)(out). Produces ATP from ADP in the presence of a proton gradient across the membrane. The alpha chain is a regulatory subunit. This is ATP synthase subunit alpha from Corynebacterium jeikeium (strain K411).